The chain runs to 140 residues: Large ribosomal subunit protein uL11 (140 aa).

This sequence belongs to the universal ribosomal protein uL11 family. Part of the ribosomal stalk of the 50S ribosomal subunit. Interacts with L10 and the large rRNA to form the base of the stalk. L10 forms an elongated spine to which L12 dimers bind in a sequential fashion forming a multimeric L10(L12)X complex. Post-translationally, one or more lysine residues are methylated.

Forms part of the ribosomal stalk which helps the ribosome interact with GTP-bound translation factors. This chain is Large ribosomal subunit protein uL11, found in Thermoanaerobacter pseudethanolicus (strain ATCC 33223 / 39E) (Clostridium thermohydrosulfuricum).